The primary structure comprises 200 residues: Small ribosomal subunit protein uS4 (200 aa).

The segment at 22–42 (TGKELQKRPYPPGQHGPGQRR) is disordered. The S4 RNA-binding domain occupies 92–152 (SRLDNLVYRL…EKSRNLQVIK (61 aa)).

It belongs to the universal ribosomal protein uS4 family. In terms of assembly, part of the 30S ribosomal subunit. Contacts protein S5. The interaction surface between S4 and S5 is involved in control of translational fidelity.

Its function is as follows. One of the primary rRNA binding proteins, it binds directly to 16S rRNA where it nucleates assembly of the body of the 30S subunit. Functionally, with S5 and S12 plays an important role in translational accuracy. In Geobacillus kaustophilus (strain HTA426), this protein is Small ribosomal subunit protein uS4.